A 188-amino-acid chain; its full sequence is ATP synthase subunit b 1 (188 aa).

The helical transmembrane segment at 7-27 (LSVLALAMLAANPAFAAGGGI) threads the bilayer.

It belongs to the ATPase B chain family. F-type ATPases have 2 components, F(1) - the catalytic core - and F(0) - the membrane proton channel. F(1) has five subunits: alpha(3), beta(3), gamma(1), delta(1), epsilon(1). F(0) has three main subunits: a(1), b(2) and c(10-14). The alpha and beta chains form an alternating ring which encloses part of the gamma chain. F(1) is attached to F(0) by a central stalk formed by the gamma and epsilon chains, while a peripheral stalk is formed by the delta and b chains.

The protein localises to the cell inner membrane. Its function is as follows. F(1)F(0) ATP synthase produces ATP from ADP in the presence of a proton or sodium gradient. F-type ATPases consist of two structural domains, F(1) containing the extramembraneous catalytic core and F(0) containing the membrane proton channel, linked together by a central stalk and a peripheral stalk. During catalysis, ATP synthesis in the catalytic domain of F(1) is coupled via a rotary mechanism of the central stalk subunits to proton translocation. Component of the F(0) channel, it forms part of the peripheral stalk, linking F(1) to F(0). The sequence is that of ATP synthase subunit b 1 from Roseobacter denitrificans (strain ATCC 33942 / OCh 114) (Erythrobacter sp. (strain OCh 114)).